An 85-amino-acid chain; its full sequence is Phosphocarrier protein HPr (85 aa).

Residues 1-85 (MFQQEVTITA…HLVKLMAELE (85 aa)) form the HPr domain. The active-site Pros-phosphohistidine intermediate is the His-15.

It belongs to the HPr family.

Its subcellular location is the cytoplasm. In terms of biological role, general (non sugar-specific) component of the phosphoenolpyruvate-dependent sugar phosphotransferase system (sugar PTS). This major carbohydrate active-transport system catalyzes the phosphorylation of incoming sugar substrates concomitantly with their translocation across the cell membrane. The phosphoryl group from phosphoenolpyruvate (PEP) is transferred to the phosphoryl carrier protein HPr by enzyme I. Phospho-HPr then transfers it to the PTS EIIA domain. This chain is Phosphocarrier protein HPr (ptsH), found in Escherichia coli O157:H7.